Reading from the N-terminus, the 529-residue chain is uncharacterized protein (529 aa).

The signal sequence occupies residues 1-20 (MYFLILILVLLLIMVAAATA).

This is an uncharacterized protein from Orgyia pseudotsugata multicapsid polyhedrosis virus (OpMNPV).